The primary structure comprises 72 residues: uncharacterized protein (72 aa).

This is an uncharacterized protein from Rickettsia conorii (strain ATCC VR-613 / Malish 7).